The sequence spans 396 residues: Elongation factor Tu (396 aa).

The region spanning 10-206 (KPHCNIGTIG…EVDAYIPQPE (197 aa)) is the tr-type G domain. The tract at residues 19–26 (GHVDHGKT) is G1. 19–26 (GHVDHGKT) provides a ligand contact to GTP. Position 26 (threonine 26) interacts with Mg(2+). A G2 region spans residues 60-64 (GITIS). The interval 81–84 (DCPG) is G3. Residues 81-85 (DCPGH) and 136-139 (NKCD) contribute to the GTP site. The tract at residues 136 to 139 (NKCD) is G4. Positions 174–176 (SAL) are G5.

This sequence belongs to the TRAFAC class translation factor GTPase superfamily. Classic translation factor GTPase family. EF-Tu/EF-1A subfamily. As to quaternary structure, monomer.

It localises to the cytoplasm. The catalysed reaction is GTP + H2O = GDP + phosphate + H(+). Functionally, GTP hydrolase that promotes the GTP-dependent binding of aminoacyl-tRNA to the A-site of ribosomes during protein biosynthesis. This is Elongation factor Tu from Paramagnetospirillum magneticum (strain ATCC 700264 / AMB-1) (Magnetospirillum magneticum).